A 277-amino-acid polypeptide reads, in one-letter code: Large ribosomal subunit protein uL2c (277 aa).

Disordered stretches follow at residues 36-56 (NKHS…HRGG) and 225-259 (MNSV…GSKS).

The protein belongs to the universal ribosomal protein uL2 family. As to quaternary structure, part of the 50S ribosomal subunit.

Its subcellular location is the plastid. It is found in the chloroplast. This chain is Large ribosomal subunit protein uL2c (rpl2), found in Psilotum nudum (Whisk fern).